A 421-amino-acid chain; its full sequence is Testin (421 aa).

Positions 92-199 (MILTNPVAAK…GDVKLPCEMD (108 aa)) constitute a PET domain. The interval 133-164 (EKQPVAGSEGAQYRKKQLAKQLPAHDQDPSKC) is disordered. Over residues 155–164 (PAHDQDPSKC) the composition is skewed to basic and acidic residues. 3 consecutive LIM zinc-binding domains span residues 234–297 (YSCY…CDSE), 299–359 (PRCA…NHAV), and 362–421 (QGCH…KMMS).

This sequence belongs to the prickle / espinas / testin family. Interacts via LIM domain 1 with ZYX. Interacts (via LIM domain 3) with ENAH and VASP. Interacts with ALKBH4, talin, actin, alpha-actinin, GRIP1 and PXN. Interacts (via LIM domain 2) with ACTL7A (via N-terminus). Heterodimer with ACTL7A; the heterodimer interacts with ENAH to form a heterotrimer.

It localises to the cytoplasm. The protein resides in the cell junction. It is found in the focal adhesion. Scaffold protein that may play a role in cell adhesion, cell spreading and in the reorganization of the actin cytoskeleton. Plays a role in the regulation of cell proliferation. May act as a tumor suppressor. The protein is Testin (TES) of Colobus guereza (Mantled guereza).